The following is a 238-amino-acid chain: Endonuclease V (238 aa).

Mg(2+) contacts are provided by Asp46 and Asp116.

This sequence belongs to the endonuclease V family. It depends on Mg(2+) as a cofactor.

It is found in the cytoplasm. It carries out the reaction Endonucleolytic cleavage at apurinic or apyrimidinic sites to products with a 5'-phosphate.. In terms of biological role, DNA repair enzyme involved in the repair of deaminated bases. Selectively cleaves double-stranded DNA at the second phosphodiester bond 3' to a deoxyinosine leaving behind the intact lesion on the nicked DNA. This chain is Endonuclease V, found in Bacillus velezensis (strain DSM 23117 / BGSC 10A6 / LMG 26770 / FZB42) (Bacillus amyloliquefaciens subsp. plantarum).